A 206-amino-acid chain; its full sequence is MRKYYYWILLLLFLILSIYIKLIGGEQNIGFNVELFKLINYNQIATLNGLMVFLSKYGREYVWIPVTALLLIFKRTRKIGITLVISFVIAIVLGEVSKYVMAQLRPFNFVNPTYLLEPKPTDYSYPSGHALIVSTGAVTLLLTSPKWMWILGIIEAVLVSYSRVYVGVHWPLDVIAGWLLGSWISFLSVQIESTGPIKKIEQMLKA.

A run of 5 helical transmembrane segments spans residues 5–25, 53–73, 79–99, 138–158, and 164–184; these read YYWILLLLFLILSIYIKLIGG, FLSKYGREYVWIPVTALLLIF, IGITLVISFVIAIVLGEVSKY, VTLLLTSPKWMWILGIIEAVL, and VYVGVHWPLDVIAGWLLGSWI.

The protein resides in the cell membrane. The catalysed reaction is di-trans,octa-cis-undecaprenyl diphosphate + H2O = di-trans,octa-cis-undecaprenyl phosphate + phosphate + H(+). The sequence is that of Undecaprenyl-diphosphatase (sepP) from Sulfolobus acidocaldarius (strain ATCC 33909 / DSM 639 / JCM 8929 / NBRC 15157 / NCIMB 11770).